Here is a 313-residue protein sequence, read N- to C-terminus: D-alanine--D-alanine ligase (313 aa).

Residues 108–308 (KLVWQQLGIP…YQELVVGVLA (201 aa)) enclose the ATP-grasp domain. ATP is bound at residue 138–193 (VAKLGLPLFVKPASEGSSVAVIKVKSADALPAALIEAVKYDKIVVVEKSVEGGGEY). Residues D262, E275, and N277 each coordinate Mg(2+).

This sequence belongs to the D-alanine--D-alanine ligase family. Requires Mg(2+) as cofactor. It depends on Mn(2+) as a cofactor.

The protein localises to the cytoplasm. The enzyme catalyses 2 D-alanine + ATP = D-alanyl-D-alanine + ADP + phosphate + H(+). Its pathway is cell wall biogenesis; peptidoglycan biosynthesis. In terms of biological role, cell wall formation. The chain is D-alanine--D-alanine ligase from Paraburkholderia phytofirmans (strain DSM 17436 / LMG 22146 / PsJN) (Burkholderia phytofirmans).